The following is a 110-amino-acid chain: MSVVIRLARAGTKKRPVYHVVVADSRFPRDGRFIERLGYFNPLMPKDNEARLKLDMEKVKGWLAKGAQPSDRVARFLDTAGVKKREARNNPEKAVPRKERKAQAEAAAKG.

The span at 82–103 shows a compositional bias: basic and acidic residues; the sequence is VKKREARNNPEKAVPRKERKAQ. The interval 82–110 is disordered; sequence VKKREARNNPEKAVPRKERKAQAEAAAKG.

Belongs to the bacterial ribosomal protein bS16 family.

This is Small ribosomal subunit protein bS16 from Bradyrhizobium sp. (strain ORS 278).